We begin with the raw amino-acid sequence, 381 residues long: Homoserine O-succinyltransferase (381 aa).

In terms of domain architecture, AB hydrolase-1 spans 45 to 360 (NAVLVCHALN…PHGHDAFLLD (316 aa)). S151 functions as the Nucleophile in the catalytic mechanism. R221 serves as a coordination point for substrate. Residues D321 and H354 contribute to the active site. D355 is a binding site for substrate.

This sequence belongs to the AB hydrolase superfamily. MetX family. In terms of assembly, homodimer.

It localises to the cytoplasm. It carries out the reaction L-homoserine + succinyl-CoA = O-succinyl-L-homoserine + CoA. Its pathway is amino-acid biosynthesis; L-methionine biosynthesis via de novo pathway; O-succinyl-L-homoserine from L-homoserine: step 1/1. Its function is as follows. Transfers a succinyl group from succinyl-CoA to L-homoserine, forming succinyl-L-homoserine. The chain is Homoserine O-succinyltransferase from Burkholderia ambifaria (strain ATCC BAA-244 / DSM 16087 / CCUG 44356 / LMG 19182 / AMMD) (Burkholderia cepacia (strain AMMD)).